Consider the following 1324-residue polypeptide: Ubiquitin carboxyl-terminal hydrolase 42 (1324 aa).

2 disordered regions span residues 1 to 38 and 63 to 87; these read MTIV…SASW and YSSS…DGIA. Over residues 10 to 25 the composition is skewed to polar residues; the sequence is SSDPSAYQNQPGSSEA. The span at 63–80 shows a compositional bias: low complexity; it reads YSSSSVPDKSKPSPQKDQ. Ser75 bears the Phosphoserine mark. Residues 111–412 form the USP domain; sequence AGLQNLGNTC…QAYVLFYIRS (302 aa). The Nucleophile role is filled by Cys120. The active-site Proton acceptor is His371. Disordered stretches follow at residues 452–494, 536–707, 722–1026, 1085–1131, 1149–1254, and 1275–1294; these read IGPQ…NRAS, QSQP…MPAP, LSNK…RHRS, RAGL…HPDR, DRFH…VKDS, and GGFP…FREK. Low complexity predominate over residues 477-489; the sequence is PSSSMSSPNGNSS. Ser483 carries the post-translational modification Phosphoserine. Over residues 536-564 the composition is skewed to polar residues; that stretch reads QSQPNLHSNSLENPTKPVPSSTITNSAVQ. The segment covering 565–576 has biased composition (low complexity); sequence STSNASTMSVSS. The span at 586 to 603 shows a compositional bias: polar residues; sequence ESCSQPVMNGKSKLNSSV. Residues Ser754 and Ser856 each carry the phosphoserine modification. 5 stretches are compositionally biased toward basic and acidic residues: residues 938-974, 984-1013, 1101-1113, 1149-1158, and 1165-1191; these read AKEK…SKTE, CPRE…ERRS, RGCE…ERHR, DRFHEHENGK, and DSVE…EEPK. Residue Ser1181 is modified to Phosphoserine. Basic residues predominate over residues 1192–1206; that stretch reads AKKHKKSKKKKKSKD. The span at 1207 to 1218 shows a compositional bias: basic and acidic residues; it reads KHRDRDSRHQQD. Residues Ser1219, Ser1222, and Ser1226 each carry the phosphoserine modification. Positions 1231–1245 are enriched in basic residues; it reads HRHKKKKKKKKRHSR. Position 1247 is a phosphoserine (Ser1247).

Belongs to the peptidase C19 family. As to expression, broadly expressed.

It catalyses the reaction Thiol-dependent hydrolysis of ester, thioester, amide, peptide and isopeptide bonds formed by the C-terminal Gly of ubiquitin (a 76-residue protein attached to proteins as an intracellular targeting signal).. Deubiquitinating enzyme which may play an important role during spermatogenesis. The sequence is that of Ubiquitin carboxyl-terminal hydrolase 42 (USP42) from Homo sapiens (Human).